The primary structure comprises 227 residues: Orotate phosphoribosyltransferase (227 aa).

4 residues coordinate 5-phospho-alpha-D-ribose 1-diphosphate: Lys51, Arg119, Lys120, and Lys123. Residues Thr149 and Arg177 each contribute to the orotate site.

Belongs to the purine/pyrimidine phosphoribosyltransferase family. PyrE subfamily. In terms of assembly, homodimer. In terms of tissue distribution, expressed in body wall muscles, spermatheca and vulva muscles.

It carries out the reaction orotidine 5'-phosphate + diphosphate = orotate + 5-phospho-alpha-D-ribose 1-diphosphate. The enzyme catalyses UMP + diphosphate = 5-phospho-alpha-D-ribose 1-diphosphate + uracil. The protein operates within pyrimidine metabolism; UMP biosynthesis via de novo pathway; UMP from orotate: step 1/2. Its pathway is pyrimidine metabolism; UMP biosynthesis via salvage pathway; UMP from uracil: step 1/1. Its function is as follows. Phosphoribosyltransferase which catalyzes the formation of UMP from uracil in vitro and thus may be involved in UMP biosynthesis via the salvage pathway. May also participate in the first step of UMP synthesis by catalyzing the formation of orotidine 5'-phosphate, a UMP precursor, from orotate. In Caenorhabditis elegans, this protein is Orotate phosphoribosyltransferase.